The following is a 396-amino-acid chain: Pyridinium-3,5-bisthiocarboxylic acid mononucleotide nickel insertion protein (396 aa).

It belongs to the LarC family.

It catalyses the reaction Ni(II)-pyridinium-3,5-bisthiocarboxylate mononucleotide = pyridinium-3,5-bisthiocarboxylate mononucleotide + Ni(2+). Involved in the biosynthesis of a nickel-pincer cofactor ((SCS)Ni(II) pincer complex). Binds Ni(2+), and functions in nickel delivery to pyridinium-3,5-bisthiocarboxylic acid mononucleotide (P2TMN), to form the mature cofactor. Is thus probably required for the activation of nickel-pincer cofactor-dependent enzymes. The sequence is that of Pyridinium-3,5-bisthiocarboxylic acid mononucleotide nickel insertion protein from Moorella thermoacetica (strain ATCC 39073 / JCM 9320).